A 98-amino-acid chain; its full sequence is UPF0235 protein APJL_1398 (98 aa).

It belongs to the UPF0235 family.

The sequence is that of UPF0235 protein APJL_1398 from Actinobacillus pleuropneumoniae serotype 3 (strain JL03).